A 242-amino-acid chain; its full sequence is RxLR effector protein PexRD15 (242 aa).

The first 24 residues, 1–24, serve as a signal peptide directing secretion; sequence MMKSLYAVNLVLLLLLAFFAPAPA. A RxLR-dEER motif is present at residues 48-66; sequence RLLRAHSSDKEEQKEEEER.

Belongs to the RxLR effector family.

It is found in the secreted. The protein localises to the host cell membrane. Its function is as follows. Effector that enhances P.infestans colonization of Nicotiana benthamiana leaves. The chain is RxLR effector protein PexRD15 from Phytophthora infestans (strain T30-4) (Potato late blight agent).